Consider the following 94-residue polypeptide: Sec-independent protein translocase protein TatA (94 aa).

Residues 1–21 (MFGRLGAPEIILILVVIILLF) form a helical membrane-spanning segment. The disordered stretch occupies residues 44 to 94 (AKAMKSEGQESTPAGPPNTDEQPPAQRTIQAAPGDVTSSRPVSEPTDTTKR). Residues 62-72 (TDEQPPAQRTI) are compositionally biased toward polar residues.

The protein belongs to the TatA/E family. The Tat system comprises two distinct complexes: a TatABC complex, containing multiple copies of TatA, TatB and TatC subunits, and a separate TatA complex, containing only TatA subunits. Substrates initially bind to the TatABC complex, which probably triggers association of the separate TatA complex to form the active translocon.

Its subcellular location is the cell membrane. Part of the twin-arginine translocation (Tat) system that transports large folded proteins containing a characteristic twin-arginine motif in their signal peptide across membranes. TatA could form the protein-conducting channel of the Tat system. The protein is Sec-independent protein translocase protein TatA of Streptomyces avermitilis (strain ATCC 31267 / DSM 46492 / JCM 5070 / NBRC 14893 / NCIMB 12804 / NRRL 8165 / MA-4680).